The primary structure comprises 331 residues: Cytosolic Fe-S cluster assembly factor NBP35 (331 aa).

Residues 1-10 (MSPSQTQIEK) show a composition bias toward polar residues. Residues 1–32 (MSPSQTQIEKSQLAAPEPEHCPGPESELAGQG) are disordered. The [4Fe-4S] cluster site is built by C21, C35, C38, and C44. An ATP-binding site is contributed by 75 to 82 (GKGGVGKS). 2 residues coordinate [4Fe-4S] cluster: C249 and C252.

The protein belongs to the Mrp/NBP35 ATP-binding proteins family. NUBP1/NBP35 subfamily. Heterotetramer of 2 NBP35 and 2 CFD1 chains. Requires [4Fe-4S] cluster as cofactor.

The protein resides in the cytoplasm. It is found in the nucleus. Its function is as follows. Component of the cytosolic iron-sulfur (Fe/S) protein assembly (CIA) machinery. Required for maturation of extramitochondrial Fe-S proteins. The NBP35-CFD1 heterotetramer forms a Fe-S scaffold complex, mediating the de novo assembly of an Fe-S cluster and its transfer to target apoproteins. Required for biogenesis and export of both ribosomal subunits, which may reflect a role in assembly of the Fe/S clusters in RLI1, a protein which performs rRNA processing and ribosome export. This Candida albicans (strain SC5314 / ATCC MYA-2876) (Yeast) protein is Cytosolic Fe-S cluster assembly factor NBP35.